Consider the following 504-residue polypeptide: Cytochrome P450 monooxygenase braC (504 aa).

Residues 4 to 24 form a helical membrane-spanning segment; the sequence is LYLPTIWASTLTAATIFIVAV. Residue Cys448 coordinates heme.

The protein belongs to the cytochrome P450 family. The cofactor is heme.

It localises to the membrane. Its pathway is secondary metabolite biosynthesis. Cytochrome P450 monooxygenase; part of the gene cluster that mediates the biosynthesis of the brasilane terpene glycosides brasilane D and E. The biosynthesis starts with the activity of the terpene cyclase braA that converts farnesyl pyrophosphate into the sesquiterpene alcohol trichobrasilenol. Subsequently, trichobrasilenol is glycosylated by the O-glycosyltransferase braB putatively using UDP-GlcNAc as sugar donor to yield brasilane A. The latter then undergoes two rounds of oxidation performed by the cytochrome P450 monooxygenase braC. In the first round braC hydroxylates C-12 forming brasilane D, which serves as substrate in the second round to establish the epoxide at the bond between C-5 and C-10 and oxidize the alcohol at C-12 to an aldehyde leading to the final product brasilane E. The chain is Cytochrome P450 monooxygenase braC from Annulohypoxylon truncatum (Hypoxylon truncatum).